Reading from the N-terminus, the 344-residue chain is Anthranilate phosphoribosyltransferase (344 aa).

5-phospho-alpha-D-ribose 1-diphosphate contacts are provided by residues glycine 83, 86-87 (GD), threonine 91, 93-96 (NIST), 111-119 (KHGGRSVSS), and serine 123. Glycine 83 contributes to the anthranilate binding site. Serine 95 contributes to the Mg(2+) binding site. Residue arginine 169 participates in anthranilate binding. Aspartate 228 and glutamate 229 together coordinate Mg(2+).

It belongs to the anthranilate phosphoribosyltransferase family. In terms of assembly, homodimer. Mg(2+) serves as cofactor.

The enzyme catalyses N-(5-phospho-beta-D-ribosyl)anthranilate + diphosphate = 5-phospho-alpha-D-ribose 1-diphosphate + anthranilate. It participates in amino-acid biosynthesis; L-tryptophan biosynthesis; L-tryptophan from chorismate: step 2/5. Its function is as follows. Catalyzes the transfer of the phosphoribosyl group of 5-phosphorylribose-1-pyrophosphate (PRPP) to anthranilate to yield N-(5'-phosphoribosyl)-anthranilate (PRA). In Methylibium petroleiphilum (strain ATCC BAA-1232 / LMG 22953 / PM1), this protein is Anthranilate phosphoribosyltransferase.